A 359-amino-acid polypeptide reads, in one-letter code: uncharacterized protein (359 aa).

The PINc domain maps to 163-275 (VVDTSCIIDG…SKVANLQKVQ (113 aa)). Positions 165 and 244 each coordinate Mg(2+). A TRAM domain is found at 289-350 (IYLPGDSLEL…LQTSAGRMIF (62 aa)).

The protein belongs to the ycf81 family. In the central section; belongs to the PINc/VapC protein family. The cofactor is Mg(2+).

An RNase. This is an uncharacterized protein from Synechocystis sp. (strain ATCC 27184 / PCC 6803 / Kazusa).